The primary structure comprises 160 residues: Cytochrome b6-f complex subunit 4 (160 aa).

The next 3 membrane-spanning stretches (helical) occupy residues 36 to 56 (LLYIFPVVILGTIACVVGLAV), 95 to 115 (LLGIALQTLIPLGLMILPFIE), and 131 to 151 (SLFLFGTVLTMYLGIGACLPI).

Belongs to the cytochrome b family. PetD subfamily. As to quaternary structure, the 4 large subunits of the cytochrome b6-f complex are cytochrome b6, subunit IV (17 kDa polypeptide, PetD), cytochrome f and the Rieske protein, while the 4 small subunits are PetG, PetL, PetM and PetN. The complex functions as a dimer.

The protein resides in the cellular thylakoid membrane. Its function is as follows. Component of the cytochrome b6-f complex, which mediates electron transfer between photosystem II (PSII) and photosystem I (PSI), cyclic electron flow around PSI, and state transitions. This is Cytochrome b6-f complex subunit 4 from Prochlorococcus marinus (strain NATL2A).